The chain runs to 187 residues: HTH-type transcriptional regulator NfxB (187 aa).

The segment at residues 26 to 45 (LKELAEAAGVSKATLHRFCG) is a DNA-binding region (H-T-H motif).

Its function is as follows. Confers resistance to guinolones. May negatively regulate the expression of genes that are associated with cell permeability to drugs. The chain is HTH-type transcriptional regulator NfxB (nfxB) from Pseudomonas aeruginosa (strain ATCC 15692 / DSM 22644 / CIP 104116 / JCM 14847 / LMG 12228 / 1C / PRS 101 / PAO1).